A 35-amino-acid chain; its full sequence is Photosystem II reaction center protein M (35 aa).

M1 is subject to N-formylmethionine. A helical transmembrane segment spans residues 7–28 (GFIASILFVLVPTVFLLILFIQ).

The protein belongs to the PsbM family. As to quaternary structure, PSII is composed of 1 copy each of membrane proteins PsbA, PsbB, PsbC, PsbD, PsbE, PsbF, PsbH, PsbI, PsbJ, PsbK, PsbL, PsbM, PsbT, PsbX, PsbY, PsbZ, Psb30/Ycf12, peripheral proteins PsbO, CyanoQ (PsbQ), PsbU, PsbV and a large number of cofactors. It forms dimeric complexes.

Its subcellular location is the cellular thylakoid membrane. Functionally, one of the components of the core complex of photosystem II (PSII). PSII is a light-driven water:plastoquinone oxidoreductase that uses light energy to abstract electrons from H(2)O, generating O(2) and a proton gradient subsequently used for ATP formation. It consists of a core antenna complex that captures photons, and an electron transfer chain that converts photonic excitation into a charge separation. This subunit is found at the monomer-monomer interface. Involved in assembly of monomeric PSII from the CP43-less intermediate. In Synechocystis sp. (strain ATCC 27184 / PCC 6803 / Kazusa), this protein is Photosystem II reaction center protein M.